A 120-amino-acid chain; its full sequence is Accessory gland protein Acp53Ea (120 aa).

The signal sequence occupies residues 1-23 (MKLIKVTLVFSLLALVFVAQTEA).

In terms of tissue distribution, main cells of accessory gland and seminal fluid.

The protein resides in the secreted. Responsible for physiological and behavioral changes in mated female flies. The chain is Accessory gland protein Acp53Ea (Acp53Ea) from Drosophila melanogaster (Fruit fly).